Reading from the N-terminus, the 146-residue chain is Small ribosomal subunit protein uS5 (146 aa).

The region spanning 8–71 (FSEVVVNIGR…DDAFKNIIKV (64 aa)) is the S5 DRBM domain.

Belongs to the universal ribosomal protein uS5 family. In terms of assembly, part of the 30S ribosomal subunit. Contacts proteins S4 and S8.

In terms of biological role, with S4 and S12 plays an important role in translational accuracy. Its function is as follows. Located at the back of the 30S subunit body where it stabilizes the conformation of the head with respect to the body. The protein is Small ribosomal subunit protein uS5 of Helicobacter hepaticus (strain ATCC 51449 / 3B1).